The primary structure comprises 225 residues: MKHLFKLDPAKNLPMNDLTKLVHSGTDGFIIGGTDNVQIEAVQKLYELLGETDLPIFLEISNESMILPEADHFLIPVVLNTENSKWTHGLHQELIKEMGAFIPWKRVTAEGYVILNKDAKVAHLTEAKTDLTDEDIVAYARLAENIFHLPIFYVEYSGMYGDPEVVRKAGAALSNTKFWYGGGIRSKEQAAEMAKYADTIIVGNIIYEDLEKALETATIFRKKTV.

A sn-glycerol 1-phosphate-binding site is contributed by Lys-6. Mg(2+) contacts are provided by Asp-8 and Thr-34. Residues 153–158 (YVEYSG), Gly-183, and 203–204 (GN) each bind sn-glycerol 1-phosphate.

This sequence belongs to the GGGP/HepGP synthase family. Group I subfamily. As to quaternary structure, homodimer. Requires Mg(2+) as cofactor.

The enzyme catalyses sn-glycerol 1-phosphate + all-trans-heptaprenyl diphosphate = 3-heptaprenyl-sn-glycero-1-phosphate + diphosphate. Its pathway is membrane lipid metabolism; glycerophospholipid metabolism. In terms of biological role, prenyltransferase that catalyzes in vivo the transfer of the heptaprenyl moiety of heptaprenyl pyrophosphate (HepPP; 35 carbon atoms) to the C3 hydroxyl of sn-glycerol-1-phosphate (G1P), producing heptaprenylglyceryl phosphate (HepGP). This reaction is an ether-bond-formation step in the biosynthesis of archaea-type G1P-based membrane lipids found in Bacillales. This Listeria monocytogenes serotype 4a (strain HCC23) protein is Heptaprenylglyceryl phosphate synthase.